The following is a 371-amino-acid chain: Dihydroorotate dehydrogenase (quinone) (371 aa).

FMN is bound by residues 79-83 (AGFDK) and T103. Position 83 (K83) interacts with substrate. 128–132 (NRMGF) is a binding site for substrate. FMN contacts are provided by N156 and N189. Position 189 (N189) interacts with substrate. Catalysis depends on S192, which acts as the Nucleophile. N194 contacts substrate. FMN contacts are provided by K225 and T253. 254–255 (NT) provides a ligand contact to substrate. FMN is bound by residues G279, G308, and 329 to 330 (YT).

This sequence belongs to the dihydroorotate dehydrogenase family. Type 2 subfamily. In terms of assembly, monomer. FMN serves as cofactor.

It localises to the cell membrane. The enzyme catalyses (S)-dihydroorotate + a quinone = orotate + a quinol. It participates in pyrimidine metabolism; UMP biosynthesis via de novo pathway; orotate from (S)-dihydroorotate (quinone route): step 1/1. Its function is as follows. Catalyzes the conversion of dihydroorotate to orotate with quinone as electron acceptor. This chain is Dihydroorotate dehydrogenase (quinone), found in Corynebacterium glutamicum (strain R).